A 285-amino-acid polypeptide reads, in one-letter code: Elongation factor Ts (285 aa).

The tract at residues 75–78 (TDFV) is involved in Mg(2+) ion dislocation from EF-Tu.

The protein belongs to the EF-Ts family.

Its subcellular location is the cytoplasm. Its function is as follows. Associates with the EF-Tu.GDP complex and induces the exchange of GDP to GTP. It remains bound to the aminoacyl-tRNA.EF-Tu.GTP complex up to the GTP hydrolysis stage on the ribosome. The protein is Elongation factor Ts of Alcanivorax borkumensis (strain ATCC 700651 / DSM 11573 / NCIMB 13689 / SK2).